The sequence spans 751 residues: Nibrin (751 aa).

The FHA domain maps to 24 to 83; that stretch reads YVVGRKNCGILIENDQSISRNHAVLTVNFPVTSLSQTDEIPTLTIKDNSKYGTFVNEEKM. 2 BRCT domains span residues 105–181 and 224–315; these read KFRV…SEFL and GKTF…LAVI. The interval 111–328 is mediates interaction with SP100; it reads EPLVVCSSCL…TENYCNPQGQ (218 aa). The tract at residues 221–403 is interaction with MTOR, MAPKAP1 and RICTOR; that stretch reads IFKGKTFVFL…SRKLSQETFN (183 aa). Thr337 carries the post-translational modification Phosphothreonine. The residue at position 343 (Ser343) is a Phosphoserine; by ATM. Phosphoserine is present on residues Ser347 and Ser398. Residues 389-418 are disordered; sequence GLEQSSRKLSQETFNIKEAPKPSSKANNVA. Ser433 carries the phosphoserine; by CDK2 modification. A Glycyl lysine isopeptide (Lys-Gly) (interchain with G-Cter in ubiquitin) cross-link involves residue Lys436. Disordered regions lie at residues 444-479 and 491-550; these read KDWTSQQQQNSIKNYFQPCTRKRERDEDNPELSSCK and EQTQ…RKRK. A compositionally biased stretch (polar residues) spans 446–457; sequence WTSQQQQNSIKN. Residues 461–467 carry the Nuclear localization signal motif; it reads PCTRKRE. Basic and acidic residues-rich tracts occupy residues 502–518 and 528–539; these read KSKEHQSQNATLDREAD and ELNRKSPDRKPL. Phosphoserine is present on Ser508. Residues Lys569 and Lys580 each participate in a glycyl lysine isopeptide (Lys-Gly) (interchain with G-Cter in SUMO2) cross-link. A disordered region spans residues 576–645; it reads VKVEKQEADD…ANSDGLQDSS (70 aa). Basic and acidic residues-rich tracts occupy residues 577 to 599 and 615 to 636; these read KVEKQEADDTIRKKPRMDAERNR and EDEREKKDELQTESWSTKHEIA. Glycyl lysine isopeptide (Lys-Gly) (interchain with G-Cter in ubiquitin) cross-links involve residues Lys684, Lys688, and Lys733. The span at 731–742 shows a compositional bias: basic and acidic residues; it reads QAKEESLADDLF. The tract at residues 731–751 is disordered; that stretch reads QAKEESLADDLFRYNPNVKRR. The short motif at 738 to 747 is the FxF/Y motif element; it reads ADDLFRYNPN.

Belongs to the Nibrin family. In terms of assembly, component of the MRN complex composed of two heterodimers RAD50 and MRE11 associated with a single NBN. The MRN complexes dimerize on DNA to form joined MRN-MRN oligomers required for DNA double-strand break repair. As part of the MRN complex, interacts with MCM9; the interaction recruits the complex to DNA repair sites. Component of the BASC complex, at least composed of BRCA1, MSH2, MSH6, MLH1, ATM, BLM, RAD50, MRE11 and NBN. Interacts with histone H2AX; this requires phosphorylation of H2AX on 'Ser-139' and promotes NBN recruitment to DNA damage sites. Interacts with (phosphorylated) MDC1; promoting NBN recruitment to DNA damage sites. Interacts with (phosphorylated) RAD17; promoting NBN recruitment to DNA damage sites. Interacts (via FxF/Y motif) with ATM. Interacts with HJURP. Interacts with INTS3. Interacts with KPNA2. Interacts with TERF2; interaction is disrupted upon NBN phosphorylation by CDK2. Interacts with (phosphorylated) RBBP8/CtIP; the interaction links the role of the MRN complex in DNA double-strand break sensing to resection. Interacts with SP100; recruits NBN to PML bodies. Interacts with ATF2. Interacts with MTOR, MAPKAP1 isoform 2 and RICTOR; indicative for an association with the mTORC2 complex. Interacts with MRNIP. Interacts with UFL1; promoting UFL1 recruitment to double-strand breaks following DNA damage. Interacts with CYREN (via XLF motif). In terms of processing, ubiquitinated at Lys-436 via 'Lys-6'-linked ubiquitin chains by RNF8, promoting NBN recruitment to DNA double-strand breaks (DSBs). Ubiquitinated at Lys-684 and Lys-688 via 'Lys-63'-linked ubiquitin chains by PELI1: ubiquitination takes place following PELI1 phosphorylation and promotes ATM activation and DNA repair. Ubiquitinated at Lys-733 via 'Lys-63'-linked ubiquitin chains by the SCF(SKP2) complex: ubiquitination takes place following SKP2 phosphorylation and promotes ATM activation and DNA repair. Post-translationally, phosphorylated by ATM in response of ionizing radiation, and such phosphorylation is responsible intra-S phase checkpoint control and telomere maintenance. Phosphorylated at Ser-433 by CDK2 in S/G2 phases abolishes interaction with TERF2, enabling DCLRE1B/Apollo recruitment to telomeres. Phosphorylation at Ser-433 in response to dysfunctional telomeres promotes non-homologous end joining repair at telomeres, while dephosphorylation by PPP1CA promotes microhomology-mediated end-joining (MMEJ) repair. High expression in the liver, heart and testis. Low expression in all other tissues analyzed. In the cerebellum the postmitotic Purkinje cells are marked specifically.

It is found in the nucleus. The protein resides in the chromosome. The protein localises to the PML body. Its subcellular location is the telomere. Its function is as follows. Component of the MRN complex, which plays a central role in double-strand break (DSB) repair, DNA recombination, maintenance of telomere integrity and meiosis. The MRN complex is involved in the repair of DNA double-strand breaks (DSBs) via homologous recombination (HR), an error-free mechanism which primarily occurs during S and G2 phases. The complex (1) mediates the end resection of damaged DNA, which generates proper single-stranded DNA, a key initial steps in HR, and is (2) required for the recruitment of other repair factors and efficient activation of ATM and ATR upon DNA damage. The MRN complex possesses single-strand endonuclease activity and double-strand-specific 3'-5' exonuclease activity, which are provided by MRE11, to initiate end resection, which is required for single-strand invasion and recombination. Within the MRN complex, NBN acts as a protein-protein adapter, which specifically recognizes and binds phosphorylated proteins, promoting their recruitment to DNA damage sites. Recruits MRE11 and RAD50 components of the MRN complex to DSBs in response to DNA damage. Promotes the recruitment of PI3/PI4-kinase family members ATM, ATR, and probably DNA-PKcs to the DNA damage sites, activating their functions. Mediates the recruitment of phosphorylated RBBP8/CtIP to DSBs, leading to cooperation between the MRN complex and RBBP8/CtIP to initiate end resection. RBBP8/CtIP specifically promotes the endonuclease activity of the MRN complex to clear DNA ends containing protein adducts. The MRN complex is also required for the processing of R-loops. NBN also functions in telomere length maintenance via its interaction with TERF2: interaction with TERF2 during G1 phase preventing recruitment of DCLRE1B/Apollo to telomeres. NBN also promotes DNA repair choice at dysfunctional telomeres: NBN phosphorylation by CDK2 promotes non-homologous end joining repair at telomeres, while unphosphorylated NBN promotes microhomology-mediated end-joining (MMEJ) repair. Enhances AKT1 phosphorylation possibly by association with the mTORC2 complex. The protein is Nibrin of Mus musculus (Mouse).